The following is a 750-amino-acid chain: Catalase A (750 aa).

A disordered region spans residues 30–49 (ERDTADAHTQQPLTTDHGVR). Active-site residues include His-93 and Asn-166. Tyr-380 serves as a coordination point for heme.

Belongs to the catalase family. Requires heme as cofactor.

It localises to the peroxisome matrix. It catalyses the reaction 2 H2O2 = O2 + 2 H2O. Catalyzes the degradation of hydrogen peroxide (H(2)O(2)) generated by peroxisomal oxidases to water and oxygen, thereby protecting cells from the toxic effects of hydrogen peroxide. This is Catalase A (catA) from Aspergillus fumigatus (strain ATCC MYA-4609 / CBS 101355 / FGSC A1100 / Af293) (Neosartorya fumigata).